Reading from the N-terminus, the 575-residue chain is Adenine deaminase 1 (575 aa).

The protein belongs to the metallo-dependent hydrolases superfamily. Adenine deaminase family. The cofactor is Mn(2+).

It catalyses the reaction adenine + H2O + H(+) = hypoxanthine + NH4(+). In Agrobacterium fabrum (strain C58 / ATCC 33970) (Agrobacterium tumefaciens (strain C58)), this protein is Adenine deaminase 1.